Here is a 246-residue protein sequence, read N- to C-terminus: tRNA (guanine-N(1)-)-methyltransferase (246 aa).

S-adenosyl-L-methionine is bound by residues glycine 114 and 134–139; that span reads IGDYIL.

The protein belongs to the RNA methyltransferase TrmD family. In terms of assembly, homodimer.

It localises to the cytoplasm. The catalysed reaction is guanosine(37) in tRNA + S-adenosyl-L-methionine = N(1)-methylguanosine(37) in tRNA + S-adenosyl-L-homocysteine + H(+). Functionally, specifically methylates guanosine-37 in various tRNAs. The protein is tRNA (guanine-N(1)-)-methyltransferase of Coxiella burnetii (strain RSA 331 / Henzerling II).